A 432-amino-acid chain; its full sequence is Tol-Pal system protein TolB (432 aa).

An N-terminal signal peptide occupies residues 1 to 21 (MKHVRIFATLLALLVISVTPA).

Belongs to the TolB family. In terms of assembly, the Tol-Pal system is composed of five core proteins: the inner membrane proteins TolA, TolQ and TolR, the periplasmic protein TolB and the outer membrane protein Pal. They form a network linking the inner and outer membranes and the peptidoglycan layer.

It is found in the periplasm. Functionally, part of the Tol-Pal system, which plays a role in outer membrane invagination during cell division and is important for maintaining outer membrane integrity. In Geobacter sulfurreducens (strain ATCC 51573 / DSM 12127 / PCA), this protein is Tol-Pal system protein TolB.